The following is a 70-amino-acid chain: Putative RNA-binding protein YbcJ (70 aa).

The region spanning 12–68 is the S4 RNA-binding domain; it reads VELCDLLKLEGWSESGAQAKIAIAEGQVKVDGAVETRKRCKIVAGQTVSFAGHSVQV.

In pull-down experiments interacts with CedA.

In terms of biological role, its structure and the presence of conserved basic residues indicates that it probably binds RNA. The polypeptide is Putative RNA-binding protein YbcJ (ybcJ) (Escherichia coli (strain K12)).